We begin with the raw amino-acid sequence, 200 residues long: Somatotropin (200 aa).

The first 22 residues, 1–22 (MARVLVVLSVVVASLFFSQGAT), serve as a signal peptide directing secretion. Histidine 38 is a binding site for Zn(2+). A disulfide bridge connects residues cysteine 71 and cysteine 173. Glutamate 182 provides a ligand contact to Zn(2+). An intrachain disulfide couples cysteine 190 to cysteine 198.

Belongs to the somatotropin/prolactin family.

It localises to the secreted. Functionally, growth hormone plays an important role in growth control and is involved in the regulation of several anabolic processes. Implicated as an osmoregulatory substance important for seawater adaptation. This is Somatotropin (gh) from Heteropneustes fossilis (Stinging catfish).